A 681-amino-acid polypeptide reads, in one-letter code: VLLCSLVAATAAWPYFGGFQRDEPDGVPTAQKQHDINFLLHKLYEPLHEANLKALEDSFDPLAHTANMPDGGVAVNKLMQEVKTQHLEERHHWFSVFNATQREEALLLVKVLLQCQDWPTAIGNAVYFRKMMNEETYVYALYTAIKHSPLTKHVVLPPLYEIMPHFFTSSEVIQQAYRAKLIEKPGRFNMNFTGTQNNPEHKIAYFGEDIGLSTHYINWHIEYPFWWNETFGYQIERRGENYFWVHHQLVNRFEAERISNHLQKIEKLHWERNLHEGFDPHTSYKNGNPFPFRHDDIHIEDVDKVAEVRDMIVMENRIRDAIAHGYVIDKEGNKVDINNEHGIDILGDIIESCVYNPYNEYYGSLHNMGHMMLGHQGDPHAKYYDTPSVLEHYETALRDPAFYKLHKYIDDLFRKHKDHLKPYSQEDLLFPGVAVNMIDIDGPLETYFEDYEYSLMNAMDDKEEMIWEDSMEISAIIPRLRHKDFSFKVNIMNNNDENKLSTIRIFAWPHRDVNGVIMPFNEGRWHAIELDKFQKELIPGENTITRKSSESSVTVPDVPSLKSLHEQTEAAIAGSSELNLDEFVSATGLPNRLLIPKGNEAGVEFKLVVAVTDGVADSVNDEINLTTKFHHYGHHGVYLDKKPHGYPLDRRVPDERLFHEIPNFGETIVKVFNRDEHVYHH.

The first 21 residues, 1–21, serve as a signal peptide directing secretion; it reads VLLCSLVAATAAWPYFGGFQR. 4 N-linked (GlcNAc...) asparagine glycosylation sites follow: Asn-98, Asn-191, Asn-228, and Asn-624.

It belongs to the tyrosinase family. Hemocyanin subfamily. In terms of assembly, hexamer. As to expression, strongly expressed in ovaries. Also expressed in heart. Not detected in hepatopancreas, gills, connective tissue or muscle.

In terms of biological role, does not function as a hemocyanin. This chain is Pseudohemocyanin-2, found in Homarus americanus (American lobster).